Consider the following 490-residue polypeptide: Aspartyl/glutamyl-tRNA(Asn/Gln) amidotransferase subunit B (490 aa).

The protein belongs to the GatB/GatE family. GatB subfamily. As to quaternary structure, heterotrimer of A, B and C subunits.

It catalyses the reaction L-glutamyl-tRNA(Gln) + L-glutamine + ATP + H2O = L-glutaminyl-tRNA(Gln) + L-glutamate + ADP + phosphate + H(+). The catalysed reaction is L-aspartyl-tRNA(Asn) + L-glutamine + ATP + H2O = L-asparaginyl-tRNA(Asn) + L-glutamate + ADP + phosphate + 2 H(+). In terms of biological role, allows the formation of correctly charged Asn-tRNA(Asn) or Gln-tRNA(Gln) through the transamidation of misacylated Asp-tRNA(Asn) or Glu-tRNA(Gln) in organisms which lack either or both of asparaginyl-tRNA or glutaminyl-tRNA synthetases. The reaction takes place in the presence of glutamine and ATP through an activated phospho-Asp-tRNA(Asn) or phospho-Glu-tRNA(Gln). This is Aspartyl/glutamyl-tRNA(Asn/Gln) amidotransferase subunit B from Burkholderia ambifaria (strain MC40-6).